The primary structure comprises 308 residues: Ribonuclease Z (308 aa).

Zn(2+) contacts are provided by H63, H65, D67, H68, H140, D211, and H269. The Proton acceptor role is filled by D67.

This sequence belongs to the RNase Z family. As to quaternary structure, homodimer. Zn(2+) is required as a cofactor.

The catalysed reaction is Endonucleolytic cleavage of RNA, removing extra 3' nucleotides from tRNA precursor, generating 3' termini of tRNAs. A 3'-hydroxy group is left at the tRNA terminus and a 5'-phosphoryl group is left at the trailer molecule.. Functionally, zinc phosphodiesterase, which displays some tRNA 3'-processing endonuclease activity. Probably involved in tRNA maturation, by removing a 3'-trailer from precursor tRNA. In Bacillus velezensis (strain DSM 23117 / BGSC 10A6 / LMG 26770 / FZB42) (Bacillus amyloliquefaciens subsp. plantarum), this protein is Ribonuclease Z.